A 316-amino-acid polypeptide reads, in one-letter code: Ribosomal protein L11 methyltransferase (316 aa).

Residues threonine 162, glycine 183, aspartate 205, and asparagine 248 each contribute to the S-adenosyl-L-methionine site.

Belongs to the methyltransferase superfamily. PrmA family.

The protein localises to the cytoplasm. The catalysed reaction is L-lysyl-[protein] + 3 S-adenosyl-L-methionine = N(6),N(6),N(6)-trimethyl-L-lysyl-[protein] + 3 S-adenosyl-L-homocysteine + 3 H(+). Its function is as follows. Methylates ribosomal protein L11. This is Ribosomal protein L11 methyltransferase from Levilactobacillus brevis (strain ATCC 367 / BCRC 12310 / CIP 105137 / JCM 1170 / LMG 11437 / NCIMB 947 / NCTC 947) (Lactobacillus brevis).